The sequence spans 240 residues: Endonuclease NucS 1 (240 aa).

Belongs to the NucS endonuclease family.

It is found in the cytoplasm. Cleaves both 3' and 5' ssDNA extremities of branched DNA structures. This chain is Endonuclease NucS 1, found in Halobacterium salinarum (strain ATCC 700922 / JCM 11081 / NRC-1) (Halobacterium halobium).